Reading from the N-terminus, the 289-residue chain is 4-hydroxy-tetrahydrodipicolinate synthase (289 aa).

Thr-43 provides a ligand contact to pyruvate. Tyr-131 (proton donor/acceptor) is an active-site residue. The active-site Schiff-base intermediate with substrate is the Lys-160. Residue Ile-200 coordinates pyruvate.

Belongs to the DapA family. In terms of assembly, homotetramer; dimer of dimers.

Its subcellular location is the cytoplasm. It catalyses the reaction L-aspartate 4-semialdehyde + pyruvate = (2S,4S)-4-hydroxy-2,3,4,5-tetrahydrodipicolinate + H2O + H(+). Its pathway is amino-acid biosynthesis; L-lysine biosynthesis via DAP pathway; (S)-tetrahydrodipicolinate from L-aspartate: step 3/4. Its function is as follows. Catalyzes the condensation of (S)-aspartate-beta-semialdehyde [(S)-ASA] and pyruvate to 4-hydroxy-tetrahydrodipicolinate (HTPA). The sequence is that of 4-hydroxy-tetrahydrodipicolinate synthase from Methanococcus vannielii (strain ATCC 35089 / DSM 1224 / JCM 13029 / OCM 148 / SB).